The sequence spans 128 residues: Global transcriptional regulator Spx 1 (128 aa).

Residues cysteine 10 and cysteine 13 are joined by a disulfide bond.

Belongs to the ArsC family. Spx subfamily. In terms of assembly, interacts with the C-terminal domain of the alpha subunit of the RNAP.

The protein localises to the cytoplasm. Its function is as follows. Global transcriptional regulator that plays a key role in stress response and exerts either positive or negative regulation of genes. Acts by interacting with the C-terminal domain of the alpha subunit of the RNA polymerase (RNAP). This interaction can enhance binding of RNAP to the promoter region of target genes and stimulate their transcription, or block interaction of RNAP with activator. The protein is Global transcriptional regulator Spx 1 of Lactococcus lactis subsp. lactis (strain IL1403) (Streptococcus lactis).